The following is a 340-amino-acid chain: Armadillo repeat-containing protein 12 (340 aa).

The interval 1 to 101 is interaction with TBC1D15; the sequence is MGKSIPQYLG…SITRCVYLLE (101 aa). ARM repeat units follow at residues 100-139, 179-218, and 278-318; these read LEAE…AFSG, LPDY…YLAQ, and SLHE…SLQY.

Interacts with TBC1D15, TBC1D21, GK2 and IMMT. Interacts with VDAC2 and VDAC3 in a TBC1D21-dependent manner. Interacts (via ARM domains) with RBBP4. Expressed in testis. Highly expressed in the mid-piece of the elongated and late spermatids. Expressed at higher levels in neuroblastoma tissues and cell lines, than those of normal dorsal ganglia (at protein level). Expressed in breast cancer, colon cancer, hepatocellular carcinoma, lung cancer, pancreas cancer, prostate cancer, renal cancer and gastric cancer, but not in their normal counterparts.

It localises to the nucleus. Its subcellular location is the mitochondrion outer membrane. In terms of biological role, essential for male fertility and sperm mitochondrial sheath formation. Required for proper mitochondrial elongation and coiling along the flagellum during the formation of the mitochondrial sheath. Facilitates the growth and aggressiveness of neuroblastoma cells. Increases the EZH2 activity and H3K27me3 levels in a RBBP4-dependent manner, and facilitates the enrichment of polycomb repressive complex 2 and H3K27me3 on gene promoters, resulting in transcriptional repression of tumor suppressors affecting the proliferation, invasion, and metastasis of tumor cells. This Homo sapiens (Human) protein is Armadillo repeat-containing protein 12 (ARMC12).